Here is a 1406-residue protein sequence, read N- to C-terminus: MKDLLKFLKQQNQTEDFDGIRIGLASPDLVRSWSFGEVKKPETINYRTFKPERDGLFCARIFGPVKDYECLCGKYKRLKHRGVICEKCGVEVTLTKVRRDRMGHIELASPVAHIWFLKSLPSRIGLLLDMTLRDIERVLYFESYVVTEPGMTTLEKSQILTEEEYLDALEEHGDEFDALMGAEAVLALLQQIDLDGEVAQMREELPEIGSETKRKKITKRLKLMEAFAASGNKPEWMIMNVLPILPPDLRPLVPLDGGRFATSDLNDLYRRVINRNNRLKRLLDLVAPDIIVRNEKRMLQESVDALLDNGRRGRAITGSNKRPLKSLADMIKGKQGRFRQNLLGKRVDYSGRSVITVGPTLKLHQCGLPKKMALELFKPFIYGKLEARGLATTIKAAKKLVEREGAEVWDVLDEVIREHPVMLNRAPTLHRLGIQAFEPVLIEGKAIHLHPLVCAAYNADFDGDQMAVHVPLTIEAQMEARTLMMSTNNVLAPANGEPIIVPSQDVVLGLYYLTRFRINGLGEGMYFTDEKEVEKAYRTGVAELHARIKVRITEHVKNADGEWEPVTKLRDTTVGRAIMWQVCPKGLPYDLIDKPLGKKPISKLINHAYRNLGLKETVMFADQIMYTGFHYAMIAGCSVGIDDMVIPEAKYTIVEDSEAEVAEIQAQFDQGLVTAGEKYNKVIDIWSSANEKVSKAMMDNLSKEMVMNRDGEMEEQDSFNSIFMMADSGARGSAAQIRQLAGMRGLMAKPDGSIIETPIKANFREGLTVLQYFISTHGARKGLADTALKTANSGYLTRRLVDVAQDLVVTNHDCGTHDGLLMTPLIEGGDVVEPLRERVLGRVVCDDVLIPGTDEVLLPRNTLIDEALCDVIEDNSVDQIKVRSIITCKTDFGICANCYGRDLARGHMINQGEAIGVVAAQSIGEPGTQLTMRTFHIGGAASRATAESSVQVKNTGTLKLQNAKFVTNSEKHLVITSRSSELTIIDEMGREKERYKVPYGSVLSKNDGEAVNSGDTIANWDPHTHPIITEVAGKVQFVDLADGVTMVRQTDELTGLSSIVITDAAQRNATGKEMRPALKLVDAKGKEVMIAGTEIPALYYLPGNAIVNLEDGADVGVGDALARIPQASSKTRDITGGLPRVADLFEARKPKLPAILAEKTGVVAFGKETKGKVRLLITQPSGEVYEEMIPKTRLLNIYEGEPVIKGEVIADGPESPHDILRLRGVAPVANYIVNEVQEVYRLQGVKINDKHIEVIVRQMIRKCEILDAGDSTFLKGEQVEVARVNISNRELEAEGKQPAEYEMQMMGITKASLATESFISAASFQETTRVLTEAAVAGKKDGLRGLKENVIVGRLIPAGTGYSYHQERARRKAAALAPAVESTVSADDAEKALTDALNSDLLSGNH.

Zn(2+) is bound by residues C70, C72, C85, and C88. The Mg(2+) site is built by D460, D462, and D464. C814, C888, C895, and C898 together coordinate Zn(2+).

This sequence belongs to the RNA polymerase beta' chain family. The RNAP catalytic core consists of 2 alpha, 1 beta, 1 beta' and 1 omega subunit. When a sigma factor is associated with the core the holoenzyme is formed, which can initiate transcription. The cofactor is Mg(2+). Zn(2+) serves as cofactor.

The catalysed reaction is RNA(n) + a ribonucleoside 5'-triphosphate = RNA(n+1) + diphosphate. DNA-dependent RNA polymerase catalyzes the transcription of DNA into RNA using the four ribonucleoside triphosphates as substrates. The sequence is that of DNA-directed RNA polymerase subunit beta' from Colwellia psychrerythraea (strain 34H / ATCC BAA-681) (Vibrio psychroerythus).